The chain runs to 190 residues: MHSSNNFFKDNIFRSLSKEDPDYSRNIEGQVIRLHWDWAQLLMLSAKRMKVAFKLDIEKDQRVWDRCTADDLKGRNGFKRCLQFTLYRPRDLLSLLNEAFFSAFRENRETIINTDLEYAAKSISMARLEDLWKEYQKIFPSIQVITSAFRSIEPELTVYTCLKKIEASFELIEENGDPKITSEIQLLKAS.

In Alternaria alternata (Alternaria rot fungus), this protein is Allergen Alt a 2 (ALTA2).